Consider the following 231-residue polypeptide: Large ribosomal subunit protein uL1 (231 aa).

This sequence belongs to the universal ribosomal protein uL1 family. As to quaternary structure, part of the 50S ribosomal subunit.

Functionally, binds directly to 23S rRNA. The L1 stalk is quite mobile in the ribosome, and is involved in E site tRNA release. Its function is as follows. Protein L1 is also a translational repressor protein, it controls the translation of the L11 operon by binding to its mRNA. This chain is Large ribosomal subunit protein uL1, found in Herminiimonas arsenicoxydans.